Here is a 189-residue protein sequence, read N- to C-terminus: Protein C1orf43 homolog (189 aa).

The chain crosses the membrane as a helical span at residues 11–31; it reads VNVVLVMAYGSLVFVLLFIFV.

The protein localises to the membrane. Its subcellular location is the golgi apparatus. The protein resides in the mitochondrion. Functionally, general regulator of phagocytosis. Required to uptake Gram negative bacterium by macrophages. This Pongo abelii (Sumatran orangutan) protein is Protein C1orf43 homolog.